The following is a 618-amino-acid chain: Cell pattern formation-associated protein STU1 (618 aa).

Residues 13–28 (MSAGPTQQPPTVTSYN) show a composition bias toward polar residues. The tract at residues 13-105 (MSAGPTQQPP…FDTSGQIAPP (93 aa)) is disordered. Over residues 48–59 (YGGYPYTNGMPS) the composition is skewed to low complexity. The segment covering 91–101 (NQYSGFDTSGQ) has biased composition (polar residues). In terms of domain architecture, HTH APSES-type spans 110–216 (RVTATLWEDE…HNISALLYHP (107 aa)). The H-T-H motif DNA-binding region spans 144–165 (GTKLLNVAGMTRGRRDGILKSE). Disordered stretches follow at residues 229-355 (AERR…YDGS) and 390-618 (SEMG…SRRR). Polar residues-rich tracts occupy residues 256–266 (MSQNGSQSLSG), 284–298 (TSAS…SDSF), 305–326 (AMSN…TRSM), and 336–355 (GSTL…YDGS). Residues 438–451 (DHEHDPEYTHDSRT) are compositionally biased toward basic and acidic residues. The segment covering 452–476 (YDNSQSQYNYTAPPVSSISSEQAHV) has biased composition (polar residues). A compositionally biased stretch (low complexity) spans 494–512 (PRSAAAPQAYYQQAYSTSP). Positions 513-563 (RSATHQSTSNLYNVMSNDRGSTTNGSANGDVYSQSTDLSNGYATPVTNGNA) are enriched in polar residues. The nuclear localization domain stretch occupies residues 566–588 (KRGRDDDDDRSSSSGQMDLKRRK).

The protein belongs to the EFG1/PHD1/stuA family.

The protein localises to the nucleus. In terms of biological role, transcription factor that regulates asexual reproduction. Binds the StuA-response elements (StRE) with the consensus sequence 5'-(A/T)CGCG(T/A)N(A/C)-3' at the promoters of target genes. Required for appressorium-mediated infection of rice leaves due to its involvement in the mobilization of lipids and glycogen. The protein is Cell pattern formation-associated protein STU1 of Pyricularia oryzae (strain 70-15 / ATCC MYA-4617 / FGSC 8958) (Rice blast fungus).